Here is a 403-residue protein sequence, read N- to C-terminus: Argininosuccinate synthase (403 aa).

10–18 (AYSGGVDTS) contacts ATP. Tyr-89 serves as a coordination point for L-citrulline. Position 119 (Gly-119) interacts with ATP. Residues Thr-121, Asn-125, and Asp-126 each contribute to the L-aspartate site. L-citrulline is bound at residue Asn-125. Residues Arg-129, Ser-177, Ser-186, Glu-262, and Tyr-274 each coordinate L-citrulline.

This sequence belongs to the argininosuccinate synthase family. Type 1 subfamily. Homotetramer.

The protein localises to the cytoplasm. It carries out the reaction L-citrulline + L-aspartate + ATP = 2-(N(omega)-L-arginino)succinate + AMP + diphosphate + H(+). It functions in the pathway amino-acid biosynthesis; L-arginine biosynthesis; L-arginine from L-ornithine and carbamoyl phosphate: step 2/3. This chain is Argininosuccinate synthase, found in Synechococcus sp. (strain JA-3-3Ab) (Cyanobacteria bacterium Yellowstone A-Prime).